The following is a 562-amino-acid chain: Nucleoprotein (562 aa).

The segment at 53 to 238 (MRRERRDDND…ITQEESQINI (186 aa)) is binding site for the cap structure m7GTP. Mn(2+)-binding residues include Asp381 and Glu383. Residues Glu391, Cys498, His501, and Cys522 each contribute to the Zn(2+) site. Position 526 (Asp526) interacts with Mn(2+).

This sequence belongs to the arenaviridae nucleocapsid protein family. In terms of assembly, homomultimerizes to form the nucleocapsid. Binds to viral genomic RNA. Interacts with glycoprotein G2. Interacts with protein Z; this interaction probably directs the encapsidated genome to budding sites. Interacts with protein L; this interaction does not interfere with Z-L interaction. Interacts with host IKBKE (via Protein kinase domain); the interaction inhibits IKBKE kinase activity.

The protein localises to the virion. It localises to the host cytoplasm. Encapsidates the genome, protecting it from nucleases. The encapsidated genomic RNA is termed the nucleocapsid (NC). Serves as template for viral transcription and replication. The increased presence of protein N in host cell does not seem to trigger the switch from transcription to replication as observed in other negative strain RNA viruses. Through the interaction with host IKBKE, strongly inhibits the phosphorylation and nuclear translocation of host IRF3, a protein involved in interferon activation pathway, leading to the inhibition of interferon-beta and IRF3-dependent promoters activation. Also encodes a functional 3'-5' exoribonuclease that degrades preferentially dsRNA substrates and thereby participates in the suppression of interferon induction. The sequence is that of Nucleoprotein from Tamiami mammarenavirus (isolate Rat/United States/W 10777/1964) (TAMV).